The sequence spans 388 residues: 2-epi-5-epi-valiolone synthase (388 aa).

Residues 92-95, 124-128, 148-149, lysine 161, lysine 170, and 188-191 contribute to the NAD(+) site; these read ERNK, GIVAD, TT, and LLAT. Zn(2+)-binding residues include glutamate 203, histidine 267, and histidine 283.

The protein belongs to the sugar phosphate cyclases superfamily. EEVS-like family. NAD(+) serves as cofactor. The cofactor is Co(2+). Zn(2+) is required as a cofactor.

The catalysed reaction is D-sedoheptulose 7-phosphate = 2-epi-5-epi-valiolone + phosphate. In terms of biological role, catalyzes the cyclization of D-sedoheptulose 7-phosphate to 2-epi-5-epi-valiolone. Probably involved in acarbose biosynthesis. In Streptomyces glaucescens, this protein is 2-epi-5-epi-valiolone synthase.